The primary structure comprises 504 residues: 2,3-bisphosphoglycerate-independent phosphoglycerate mutase (504 aa).

Asp11 and Ser61 together coordinate Mn(2+). Ser61 acts as the Phosphoserine intermediate in catalysis. Substrate-binding positions include His122, Arg152–Asp153, Arg183, Arg189, Arg255–Arg258, and Lys329. Positions 396, 400, 437, 438, and 455 each coordinate Mn(2+).

It belongs to the BPG-independent phosphoglycerate mutase family. In terms of assembly, monomer. Mn(2+) is required as a cofactor.

The enzyme catalyses (2R)-2-phosphoglycerate = (2R)-3-phosphoglycerate. Its pathway is carbohydrate degradation; glycolysis; pyruvate from D-glyceraldehyde 3-phosphate: step 3/5. Catalyzes the interconversion of 2-phosphoglycerate and 3-phosphoglycerate. The protein is 2,3-bisphosphoglycerate-independent phosphoglycerate mutase of Bacteroides thetaiotaomicron (strain ATCC 29148 / DSM 2079 / JCM 5827 / CCUG 10774 / NCTC 10582 / VPI-5482 / E50).